Consider the following 569-residue polypeptide: Mitogen-activated protein kinase 7 (569 aa).

A Protein kinase domain is found at 13-304; sequence YKIQEIVGKG…AEEALADPYF (292 aa). Residues 19–27 and Lys42 contribute to the ATP site; that span reads VGKGSYGVV. The active-site Proton acceptor is Asp139. Thr175 carries the phosphothreonine modification. Positions 175–177 match the TXY motif; the sequence is TDY. Tyr177 is modified (phosphotyrosine). Residues 401–420 are disordered; that stretch reads TTVHSTSIPPNEGLDATSQV.

This sequence belongs to the protein kinase superfamily. CMGC Ser/Thr protein kinase family. MAP kinase subfamily. In terms of processing, dually phosphorylated on Thr-175 and Tyr-177, which activates the enzyme.

The enzyme catalyses L-seryl-[protein] + ATP = O-phospho-L-seryl-[protein] + ADP + H(+). It catalyses the reaction L-threonyl-[protein] + ATP = O-phospho-L-threonyl-[protein] + ADP + H(+). Activated by threonine and tyrosine phosphorylation. The chain is Mitogen-activated protein kinase 7 (MPK7) from Oryza sativa subsp. japonica (Rice).